A 312-amino-acid polypeptide reads, in one-letter code: Acetylglutamate kinase (312 aa).

Residues 69–70 (GG), Arg-91, and Asn-191 contribute to the substrate site.

It belongs to the acetylglutamate kinase family. ArgB subfamily.

Its subcellular location is the cytoplasm. It carries out the reaction N-acetyl-L-glutamate + ATP = N-acetyl-L-glutamyl 5-phosphate + ADP. It functions in the pathway amino-acid biosynthesis; L-arginine biosynthesis; N(2)-acetyl-L-ornithine from L-glutamate: step 2/4. Its function is as follows. Catalyzes the ATP-dependent phosphorylation of N-acetyl-L-glutamate. In Streptomyces griseus subsp. griseus (strain JCM 4626 / CBS 651.72 / NBRC 13350 / KCC S-0626 / ISP 5235), this protein is Acetylglutamate kinase.